The sequence spans 52 residues: UPF0181 protein NTHI1697 (52 aa).

This sequence belongs to the UPF0181 family.

The polypeptide is UPF0181 protein NTHI1697 (Haemophilus influenzae (strain 86-028NP)).